A 604-amino-acid chain; its full sequence is Elongation factor 4 (604 aa).

One can recognise a tr-type G domain in the interval 7–189; sequence SKIRNFCIIA…SIVHLVPPPS (183 aa). GTP is bound by residues 19 to 24 and 136 to 139; these read DHGKST and NKID.

It belongs to the TRAFAC class translation factor GTPase superfamily. Classic translation factor GTPase family. LepA subfamily.

It localises to the cell inner membrane. The enzyme catalyses GTP + H2O = GDP + phosphate + H(+). In terms of biological role, required for accurate and efficient protein synthesis under certain stress conditions. May act as a fidelity factor of the translation reaction, by catalyzing a one-codon backward translocation of tRNAs on improperly translocated ribosomes. Back-translocation proceeds from a post-translocation (POST) complex to a pre-translocation (PRE) complex, thus giving elongation factor G a second chance to translocate the tRNAs correctly. Binds to ribosomes in a GTP-dependent manner. The chain is Elongation factor 4 from Synechococcus sp. (strain ATCC 27144 / PCC 6301 / SAUG 1402/1) (Anacystis nidulans).